The following is a 198-amino-acid chain: Chitin synthase 2 (198 aa).

This sequence belongs to the chitin synthase family. Class III subfamily.

Its subcellular location is the cell membrane. It carries out the reaction [(1-&gt;4)-N-acetyl-beta-D-glucosaminyl](n) + UDP-N-acetyl-alpha-D-glucosamine = [(1-&gt;4)-N-acetyl-beta-D-glucosaminyl](n+1) + UDP + H(+). Its function is as follows. Polymerizes chitin, a structural polymer of the cell wall and septum, by transferring the sugar moiety of UDP-GlcNAc to the non-reducing end of the growing chitin polymer. The protein is Chitin synthase 2 (CHS2) of Rhinocladiella atrovirens.